Consider the following 219-residue polypeptide: Resolvase (219 aa).

Positions 15–159 constitute a Resolvase/invertase-type recombinase catalytic domain; sequence VARIYLRAST…EDRRERQRQG (145 aa). Ser23 functions as the O-(5'-phospho-DNA)-serine intermediate in the catalytic mechanism.

Belongs to the site-specific recombinase resolvase family.

Involved in plasmid partition. The protein is Resolvase (parA) of Escherichia coli.